Reading from the N-terminus, the 79-residue chain is Sulfur carrier protein TusA (79 aa).

Cys17 serves as the catalytic Cysteine persulfide intermediate.

Belongs to the sulfur carrier protein TusA family.

It is found in the cytoplasm. Its function is as follows. Sulfur carrier protein which probably makes part of a sulfur-relay system. This Pasteurella multocida (strain Pm70) protein is Sulfur carrier protein TusA.